We begin with the raw amino-acid sequence, 559 residues long: Spermidine/putrescine import ATP-binding protein PotA (559 aa).

Positions 7 to 448 constitute an ABC transporter domain; sequence IEIEGLNKTF…PKTEWIANFI (442 aa). An ATP-binding site is contributed by 40–47; the sequence is GPSGCGKT. The segment at 108–317 is insert; it reads WTKLDEIPKL…EAFEKRYLSR (210 aa).

This sequence belongs to the ABC transporter superfamily. Spermidine/putrescine importer (TC 3.A.1.11.1) family. As to quaternary structure, the complex is composed of two ATP-binding proteins (PotA), two transmembrane proteins (PotB and PotC) and a solute-binding protein (PotD).

It localises to the cell membrane. It catalyses the reaction ATP + H2O + polyamine-[polyamine-binding protein]Side 1 = ADP + phosphate + polyamineSide 2 + [polyamine-binding protein]Side 1.. Functionally, part of the ABC transporter complex PotABCD involved in spermidine/putrescine import. Responsible for energy coupling to the transport system. This is Spermidine/putrescine import ATP-binding protein PotA from Mycoplasma genitalium (strain ATCC 33530 / DSM 19775 / NCTC 10195 / G37) (Mycoplasmoides genitalium).